Reading from the N-terminus, the 348-residue chain is TEGPYFYVPMVNTTGIVRSPYEYPQYYLVNPAAFAILGAYMFFLIIVGFPVNFMTLYVTLEHKKLRTPLNYILLNLAVADLFMVIGGFTTTMYTSMHGYFVLGRLGCNLEGFFATLGGMISLWSLAVLAIERWVVVCKPISNFRFGENHAIMGVSLTWGMALACTVPPLVGWSRYIPEGMQCSCGIDYYTRAEGFNNETFVLYMFCCHFTVPLTIIFFCYGRLLCAVKEAAAAQQESETTQRAEREVTRMVVIMVIGFLVCWLPYASVAWFVFTHQGSEFGPLFMTIPAFFAKSSAIYNPMIYICMNKQFRHCMITTLFCGKNPFEGEEEGASSTKTEASSASSVSPA.

Residues 1–33 (TEGPYFYVPMVNTTGIVRSPYEYPQYYLVNPAA) lie on the Extracellular side of the membrane. Residue N12 is glycosylated (N-linked (GlcNAc...) asparagine). The helical transmembrane segment at 34–58 (FAILGAYMFFLIIVGFPVNFMTLYV) threads the bilayer. At 59–70 (TLEHKKLRTPLN) the chain is on the cytoplasmic side. Residues 71–93 (YILLNLAVADLFMVIGGFTTTMY) form a helical membrane-spanning segment. At 94–107 (TSMHGYFVLGRLGC) the chain is on the extracellular side. Residues C107 and C184 are joined by a disulfide bond. The helical transmembrane segment at 108–130 (NLEGFFATLGGMISLWSLAVLAI) threads the bilayer. The 'Ionic lock' involved in activated form stabilization signature appears at 131–133 (ERW). At 131–149 (ERWVVVCKPISNFRFGENH) the chain is on the cytoplasmic side. Residues 150–170 (AIMGVSLTWGMALACTVPPLV) traverse the membrane as a helical segment. Topologically, residues 171 to 199 (GWSRYIPEGMQCSCGIDYYTRAEGFNNET) are extracellular. A glycan (N-linked (GlcNAc...) asparagine) is linked at N197. The chain crosses the membrane as a helical span at residues 200 to 221 (FVLYMFCCHFTVPLTIIFFCYG). The Cytoplasmic portion of the chain corresponds to 222–249 (RLLCAVKEAAAAQQESETTQRAEREVTR). A helical membrane pass occupies residues 250–271 (MVVIMVIGFLVCWLPYASVAWF). Over 272–283 (VFTHQGSEFGPL) the chain is Extracellular. A helical membrane pass occupies residues 284-305 (FMTIPAFFAKSSAIYNPMIYIC). The residue at position 293 (K293) is an N6-(retinylidene)lysine. The Cytoplasmic segment spans residues 306–348 (MNKQFRHCMITTLFCGKNPFEGEEEGASSTKTEASSASSVSPA). A lipid anchor (S-palmitoyl cysteine) is attached at C320. Residues 327-348 (GEEEGASSTKTEASSASSVSPA) form a disordered region. Residues 332 to 348 (ASSTKTEASSASSVSPA) are compositionally biased toward low complexity.

This sequence belongs to the G-protein coupled receptor 1 family. Opsin subfamily. In terms of processing, phosphorylated on some or all of the serine and threonine residues present in the C-terminal region. Post-translationally, contains one covalently linked retinal chromophore.

The protein resides in the membrane. It localises to the cell projection. Its subcellular location is the cilium. It is found in the photoreceptor outer segment. In terms of biological role, photoreceptor required for image-forming vision at low light intensity. While most salt water fish species use retinal as chromophore, most freshwater fish use 3-dehydroretinal, or a mixture of retinal and 3-dehydroretinal. Light-induced isomerization of 11-cis to all-trans retinal triggers a conformational change that activates signaling via G-proteins. Subsequent receptor phosphorylation mediates displacement of the bound G-protein alpha subunit by arrestin and terminates signaling. This is Rhodopsin (rho) from Sargocentron xantherythrum (Hawaiian squirrelfish).